Consider the following 80-residue polypeptide: RNA-binding protein Hfq (80 aa).

The 61-residue stretch at 10-70 (DIFLNQVRKE…ISTISPMKSV (61 aa)) folds into the Sm domain.

The protein belongs to the Hfq family. As to quaternary structure, homohexamer.

Its function is as follows. RNA chaperone that binds small regulatory RNA (sRNAs) and mRNAs to facilitate mRNA translational regulation in response to envelope stress, environmental stress and changes in metabolite concentrations. Also binds with high specificity to tRNAs. In Ruminiclostridium cellulolyticum (strain ATCC 35319 / DSM 5812 / JCM 6584 / H10) (Clostridium cellulolyticum), this protein is RNA-binding protein Hfq.